We begin with the raw amino-acid sequence, 931 residues long: Semaphorin-6C (931 aa).

A signal peptide spans 1 to 25 (MPRAPHSMPLLLLLLLLSSLPQAQA). At 26–605 (AFPQDPTPLL…ASASRSIPIP (580 aa)) the chain is on the extracellular side. Residues 31-517 (PTPLLTSDLQ…FPGCIVYLSL (487 aa)) enclose the Sema domain. Asn-71 carries an N-linked (GlcNAc...) asparagine glycan. 4 disulfides stabilise this stretch: Cys-112–Cys-122, Cys-140–Cys-149, Cys-263–Cys-374, and Cys-288–Cys-333. A glycan (N-linked (GlcNAc...) asparagine) is linked at Asn-287. Asn-438 carries N-linked (GlcNAc...) asparagine glycosylation. 4 disulfide bridges follow: Cys-480–Cys-511, Cys-520–Cys-538, Cys-526–Cys-571, and Cys-530–Cys-546. Positions 556–591 (DVDLTGNQESTEHGDCQDGATGSQSGPGDSAYGVRR) are disordered. A helical transmembrane segment spans residues 606–626 (LLLACVAAAFALGASVSGLLV). At 627-931 (SCACRRANRR…PAPHGGHFNF (305 aa)) the chain is on the cytoplasmic side. Disordered regions lie at residues 655–747 (LARL…GGPA) and 777–931 (HGPQ…HFNF). Residues 693 to 708 (PPELACLPTPETTPEL) are compositionally biased toward low complexity. Basic and acidic residues predominate over residues 893-906 (PEGHRGRSLKRVDV). The segment covering 911 to 923 (SPKPPLASPPQPA) has biased composition (pro residues).

The protein belongs to the semaphorin family.

The protein resides in the cell membrane. May be a stop signal for the dorsal root ganglion neurons in their target areas, and possibly also for other neurons. May also be involved in the maintenance and remodeling of neuronal connections. This Mus musculus (Mouse) protein is Semaphorin-6C (Sema6c).